The sequence spans 977 residues: DNA-directed RNA polymerase 3B, chloroplastic (977 aa).

Residues 1-71 constitute a chloroplast transit peptide; that stretch reads MASTASYSPS…NNIQSQTTVC (71 aa). Residues Asp-678, Lys-753, and Asp-910 contribute to the active site.

Belongs to the phage and mitochondrial RNA polymerase family.

The protein resides in the plastid. Its subcellular location is the chloroplast. It carries out the reaction RNA(n) + a ribonucleoside 5'-triphosphate = RNA(n+1) + diphosphate. DNA-dependent RNA polymerase catalyzes the transcription of DNA into RNA using the four ribonucleoside triphosphates as substrates. This Nicotiana tabacum (Common tobacco) protein is DNA-directed RNA polymerase 3B, chloroplastic (RPOT3-TOM).